The chain runs to 438 residues: Coenzyme A disulfide reductase (438 aa).

An FAD-binding site is contributed by 8–33; sequence GAVAGGATCASQIRRLDKESDIIIFE. Residues Thr-15, Gln-19, Arg-22, Ser-39, and Asn-42 each contribute to the substrate site. Residue Cys-43 is the Nucleophile of the active site. Cys-43 functions as the Redox-active in the catalytic mechanism. Lys-71 is a substrate binding site. An NADP(+)-binding site is contributed by 151-166; that stretch reads VLVIGAGYVSLEVLEN. 267–277 is an FAD binding site; that stretch reads TNVPNIYAIGD. His-299 provides a ligand contact to substrate. Tyr-419 is a binding site for FAD. Substrate is bound at residue Lys-427.

This sequence belongs to the class-III pyridine nucleotide-disulfide oxidoreductase family. In terms of assembly, homodimer. FAD is required as a cofactor.

The enzyme catalyses NADP(+) + 2 CoA = CoA-disulfide + NADPH + H(+). Catalyzes specifically the NADPH-dependent reduction of coenzyme A disulfide. The protein is Coenzyme A disulfide reductase of Staphylococcus aureus (strain Mu3 / ATCC 700698).